The sequence spans 620 residues: Glutathione-regulated potassium-efflux system protein KefC (620 aa).

12 helical membrane-spanning segments follow: residues 4–24, 26–46, 54–74, 90–110, 114–134, 149–169, 178–198, 218–238, 270–290, 294–314, 327–347, and 359–379; these read HTLI…PIAV, LGLG…PWGL, SILH…GLEL, GALQ…LLGL, VAEL…MQAM, FAVL…IPLL, MGAF…VVLL, VFSA…EEVG, GLLL…GTLL, LRIV…LWLI, WFAV…GAAQ, and SLTL…VILN. The 120-residue stretch at 399-518 folds into the RCK N-terminal domain; sequence QPRVIIAGFG…AGVEKPERET (120 aa). The disordered stretch occupies residues 597-620; it reads GWQGTEEGKHTGNMADEPETKPSS.

It belongs to the monovalent cation:proton antiporter 2 (CPA2) transporter (TC 2.A.37) family. KefC subfamily. As to quaternary structure, homodimer. Interacts with the regulatory subunit KefF.

Its subcellular location is the cell inner membrane. Its function is as follows. Pore-forming subunit of a potassium efflux system that confers protection against electrophiles. Catalyzes K(+)/H(+) antiport. The protein is Glutathione-regulated potassium-efflux system protein KefC of Escherichia coli O7:K1 (strain IAI39 / ExPEC).